Reading from the N-terminus, the 247-residue chain is Probable transcriptional regulatory protein GTNG_2524 (247 aa).

Basic residues predominate over residues 1 to 14 (MAGHSKWKNIQRRK). The segment at 1–21 (MAGHSKWKNIQRRKNAQDAKR) is disordered.

It belongs to the TACO1 family.

It localises to the cytoplasm. This chain is Probable transcriptional regulatory protein GTNG_2524, found in Geobacillus thermodenitrificans (strain NG80-2).